We begin with the raw amino-acid sequence, 660 residues long: Bifunctional polymyxin resistance protein ArnA (660 aa).

Residues M1–L304 are formyltransferase ArnAFT. H86–I88 lines the (6R)-10-formyltetrahydrofolate pocket. H104 serves as the catalytic Proton donor; for formyltransferase activity. Residues R114 and V136–D140 each bind (6R)-10-formyltetrahydrofolate. The segment at R314–S660 is dehydrogenase ArnADH. Residues D347 and D368–I369 contribute to the NAD(+) site. Residues A393, Y398, and T432 to S433 contribute to the UDP-alpha-D-glucuronate site. The Proton acceptor; for decarboxylase activity role is filled by E434. UDP-alpha-D-glucuronate contacts are provided by residues R460, N492, K526 to R535, and Y613. R619 acts as the Proton donor; for decarboxylase activity in catalysis.

This sequence in the N-terminal section; belongs to the Fmt family. UDP-L-Ara4N formyltransferase subfamily. In the C-terminal section; belongs to the NAD(P)-dependent epimerase/dehydratase family. UDP-glucuronic acid decarboxylase subfamily. As to quaternary structure, homohexamer, formed by a dimer of trimers.

The catalysed reaction is UDP-alpha-D-glucuronate + NAD(+) = UDP-beta-L-threo-pentopyranos-4-ulose + CO2 + NADH. It carries out the reaction UDP-4-amino-4-deoxy-beta-L-arabinose + (6R)-10-formyltetrahydrofolate = UDP-4-deoxy-4-formamido-beta-L-arabinose + (6S)-5,6,7,8-tetrahydrofolate + H(+). The protein operates within nucleotide-sugar biosynthesis; UDP-4-deoxy-4-formamido-beta-L-arabinose biosynthesis; UDP-4-deoxy-4-formamido-beta-L-arabinose from UDP-alpha-D-glucuronate: step 1/3. Its pathway is nucleotide-sugar biosynthesis; UDP-4-deoxy-4-formamido-beta-L-arabinose biosynthesis; UDP-4-deoxy-4-formamido-beta-L-arabinose from UDP-alpha-D-glucuronate: step 3/3. It participates in bacterial outer membrane biogenesis; lipopolysaccharide biosynthesis. In terms of biological role, bifunctional enzyme that catalyzes the oxidative decarboxylation of UDP-glucuronic acid (UDP-GlcUA) to UDP-4-keto-arabinose (UDP-Ara4O) and the addition of a formyl group to UDP-4-amino-4-deoxy-L-arabinose (UDP-L-Ara4N) to form UDP-L-4-formamido-arabinose (UDP-L-Ara4FN). The modified arabinose is attached to lipid A and is required for resistance to polymyxin and cationic antimicrobial peptides. This Escherichia coli O6:H1 (strain CFT073 / ATCC 700928 / UPEC) protein is Bifunctional polymyxin resistance protein ArnA.